The chain runs to 2032 residues: Cytoskeleton-associated protein 5 (2032 aa).

TOG regions lie at residues 1-223 (MGDD…KLPT), 268-502 (YELL…LVHG), and 588-817 (SIEV…GQSP). An N6-acetyllysine modification is found at lysine 48. HEAT repeat units follow at residues 159 to 197 (IISL…WNRD), 356 to 394 (GQYA…TTTL), and 434 to 472 (KSLL…VVGE). Residues 501–579 (HGKKSGLATE…GTKNKKGLET (79 aa)) are disordered. The stretch at 750 to 788 (ELNVKAFISNVKTALAATNPAVRTSAITLLGVMYLYVGP) is one HEAT 4 repeat. The disordered stretch occupies residues 811 to 848 (KMQGQSPPAPTRGIAKHSTSATDEGEDGEEPGEGGNDV). Serine 816 carries the post-translational modification Phosphoserine. The span at 833 to 842 (DEGEDGEEPG) shows a compositional bias: acidic residues. TOG regions lie at residues 853–1081 (PRIE…ANMP) and 1193–1428 (IEQL…KRPS). HEAT repeat units follow at residues 855–893 (IEIS…EAKF), 936–974 (RQHV…QTGM), and 1013–1051 (PTDL…HLGY). The segment covering 1078-1095 (ANMPSKPAAPAKAMSKPM) has biased composition (low complexity). A disordered region spans residues 1078–1156 (ANMPSKPAAP…KTTLKEDDDK (79 aa)). HEAT repeat units follow at residues 1284–1322 (ENEA…VYPA), 1324–1357 (KMFP…SYGM), and 1361–1399 (QPTP…VHGD). Positions 1420-1459 (IKRSAKRPSAAPVKQAEEKPQRTQNINSNANMLRKGPAED) are disordered. Polar residues predominate over residues 1441–1450 (RTQNINSNAN). Position 1469 is a phosphoserine (serine 1469). A disordered region spans residues 1801 to 1822 (SMDQTGSKSDKETEKGASRIDE). A compositionally biased stretch (basic and acidic residues) spans 1808 to 1822 (KSDKETEKGASRIDE). Phosphoserine is present on serine 1861. Disordered regions lie at residues 1893–1926 (SKGR…GNTN) and 1948–2032 (LDNT…SSRK). Positions 1909–1921 (VTCVPTPTSTVSS) are enriched in low complexity. Residues 1932 to 1957 (PSVYLERLKILRQRCGLDNTKQDDRP) form an interaction with TACC3 region. The segment covering 1972–1983 (ASSTDMLHSKLS) has biased composition (polar residues). Basic and acidic residues predominate over residues 1984-1997 (QLRESREQHQHSDL). Residues 2002–2015 (THSAGTMTSSSSTT) show a composition bias toward low complexity. Basic and acidic residues predominate over residues 2018-2032 (DDLKKRLERIKSSRK).

This sequence belongs to the TOG/XMAP215 family. In terms of assembly, interacts with TACC1. Interacts with HNRNPA2B1. Interacts with TACC3 independently of clathrin. Interacts with TACC3 and clathrin forming the TACC3/ch-TOG/clathrin complex located at spindle inter-microtubules bridges. Interacts with NDC80; indicative for an association with the NDC80 complex. Interacts with SLAIN2. Interacts with SLAIN1.

It is found in the cytoplasm. Its subcellular location is the cytoskeleton. The protein resides in the microtubule organizing center. It localises to the centrosome. The protein localises to the spindle pole. It is found in the spindle. Its subcellular location is the chromosome. The protein resides in the centromere. It localises to the kinetochore. Binds to the plus end of microtubules and regulates microtubule dynamics and microtubule organization. Acts as a processive microtubule polymerase. Promotes cytoplasmic microtubule nucleation and elongation. Plays a major role in organizing spindle poles. In spindle formation protects kinetochore microtubules from depolymerization by KIF2C and has an essential role in centrosomal microtubule assembly independently of KIF2C activity. Contributes to centrosome integrity. Acts as a component of the TACC3/ch-TOG/clathrin complex proposed to contribute to stabilization of kinetochore fibers of the mitotic spindle by acting as inter-microtubule bridge. The TACC3/ch-TOG/clathrin complex is required for the maintenance of kinetochore fiber tension. Enhances the strength of NDC80 complex-mediated kinetochore-tip microtubule attachments. In Mus musculus (Mouse), this protein is Cytoskeleton-associated protein 5.